A 270-amino-acid polypeptide reads, in one-letter code: NAD(P)H-hydrate epimerase (270 aa).

Residues 25–234 (FQQLMDLMQN…DLLAPEEIYQ (210 aa)) enclose the YjeF N-terminal domain. 73–77 (DNGGQ) is a (6S)-NADPHX binding site. Residues Asn74 and Asp144 each contribute to the K(+) site. (6S)-NADPHX-binding positions include 148 to 154 (GVGLYGH) and Glu177. Thr180 is a binding site for K(+).

It belongs to the NnrE/AIBP family. K(+) serves as cofactor.

It carries out the reaction (6R)-NADHX = (6S)-NADHX. The enzyme catalyses (6R)-NADPHX = (6S)-NADPHX. In terms of biological role, catalyzes the epimerization of the S- and R-forms of NAD(P)HX, a damaged form of NAD(P)H that is a result of enzymatic or heat-dependent hydration. This is a prerequisite for the S-specific NAD(P)H-hydrate dehydratase to allow the repair of both epimers of NAD(P)HX. The polypeptide is NAD(P)H-hydrate epimerase (Legionella pneumophila (strain Paris)).